A 178-amino-acid chain; its full sequence is Large ribosomal subunit protein bL25 (178 aa).

The protein belongs to the bacterial ribosomal protein bL25 family. CTC subfamily. Part of the 50S ribosomal subunit; part of the 5S rRNA/L5/L18/L25 subcomplex. Contacts the 5S rRNA. Binds to the 5S rRNA independently of L5 and L18.

Its function is as follows. This is one of the proteins that binds to the 5S RNA in the ribosome where it forms part of the central protuberance. The chain is Large ribosomal subunit protein bL25 from Helicobacter hepaticus (strain ATCC 51449 / 3B1).